Reading from the N-terminus, the 217-residue chain is Cytidylate kinase (217 aa).

Position 9-17 (9-17 (GPSSSGKSS)) interacts with ATP.

Belongs to the cytidylate kinase family. Type 1 subfamily.

It is found in the cytoplasm. The enzyme catalyses CMP + ATP = CDP + ADP. It catalyses the reaction dCMP + ATP = dCDP + ADP. The polypeptide is Cytidylate kinase (Mycoplasma pneumoniae (strain ATCC 29342 / M129 / Subtype 1) (Mycoplasmoides pneumoniae)).